The primary structure comprises 227 residues: Uracil-DNA glycosylase (227 aa).

Asp-65 functions as the Proton acceptor in the catalytic mechanism.

Belongs to the uracil-DNA glycosylase (UDG) superfamily. UNG family.

Its subcellular location is the cytoplasm. It catalyses the reaction Hydrolyzes single-stranded DNA or mismatched double-stranded DNA and polynucleotides, releasing free uracil.. In terms of biological role, excises uracil residues from the DNA which can arise as a result of misincorporation of dUMP residues by DNA polymerase or due to deamination of cytosine. In Lactobacillus delbrueckii subsp. bulgaricus (strain ATCC 11842 / DSM 20081 / BCRC 10696 / JCM 1002 / NBRC 13953 / NCIMB 11778 / NCTC 12712 / WDCM 00102 / Lb 14), this protein is Uracil-DNA glycosylase.